Reading from the N-terminus, the 513-residue chain is Activin receptor type-2B (513 aa).

The signal sequence occupies residues 1 to 18 (MTAPWAALALLWGSLCAG). The Extracellular portion of the chain corresponds to 19–137 (SGRGEAETRE…PPPTAPTLLT (119 aa)). Disulfide bonds link C29–C59, C49–C77, C84–C103, C90–C102, and C104–C109. N42 and N65 each carry an N-linked (GlcNAc...) asparagine glycan. A helical transmembrane segment spans residues 138 to 158 (VLAYSLLPIGGLSLIVLLAFW). Over 159–513 (MYRHRKPPYG…VDLLPKESSI (355 aa)) the chain is Cytoplasmic. The Protein kinase domain occupies 190-481 (LQLLEIKARG…AGCVEERVSL (292 aa)). ATP-binding positions include 196-204 (KARGRFGCV) and K217. Catalysis depends on D322, which acts as the Proton acceptor. Residues 492 to 513 (DCLVSLVTSVTNVDLLPKESSI) are interaction with DYNLT1.

This sequence belongs to the protein kinase superfamily. TKL Ser/Thr protein kinase family. TGFB receptor subfamily. As to quaternary structure, forms an activin receptor complex with activin type II receptors such as ACVR1B. Interacts with VPS39. Interacts with DYNLT1. Interacts with BMP3. Interacts with BMP2. Mg(2+) serves as cofactor. Requires Mn(2+) as cofactor. Post-translationally, phosphorylated. Constitutive phosphorylation is in part catalyzed by its own kinase activity.

It localises to the cell membrane. The catalysed reaction is L-threonyl-[receptor-protein] + ATP = O-phospho-L-threonyl-[receptor-protein] + ADP + H(+). It carries out the reaction L-seryl-[receptor-protein] + ATP = O-phospho-L-seryl-[receptor-protein] + ADP + H(+). In terms of biological role, transmembrane serine/threonine kinase activin type-2 receptor forming an activin receptor complex with activin type-1 serine/threonine kinase receptors (ACVR1, ACVR1B or ACVR1c). Transduces the activin signal from the cell surface to the cytoplasm and is thus regulating many physiological and pathological processes including neuronal differentiation and neuronal survival, hair follicle development and cycling, FSH production by the pituitary gland, wound healing, extracellular matrix production, immunosuppression and carcinogenesis. Activin is also thought to have a paracrine or autocrine role in follicular development in the ovary. Within the receptor complex, the type-2 receptors act as a primary activin receptors (binds activin-A/INHBA, activin-B/INHBB as well as inhibin-A/INHA-INHBA). The type-1 receptors like ACVR1B act as downstream transducers of activin signals. Activin binds to type-2 receptor at the plasma membrane and activates its serine-threonine kinase. The activated receptor type-2 then phosphorylates and activates the type-1 receptor. Once activated, the type-1 receptor binds and phosphorylates the SMAD proteins SMAD2 and SMAD3, on serine residues of the C-terminal tail. Soon after their association with the activin receptor and subsequent phosphorylation, SMAD2 and SMAD3 are released into the cytoplasm where they interact with the common partner SMAD4. This SMAD complex translocates into the nucleus where it mediates activin-induced transcription. Inhibitory SMAD7, which is recruited to ACVR1B through FKBP1A, can prevent the association of SMAD2 and SMAD3 with the activin receptor complex, thereby blocking the activin signal. Activin signal transduction is also antagonized by the binding to the receptor of inhibin-B via the IGSF1 inhibin coreceptor. The sequence is that of Activin receptor type-2B (Acvr2b) from Rattus norvegicus (Rat).